The primary structure comprises 167 residues: Leptin (167 aa).

The signal sequence occupies residues 1 to 21 (MRCGPLYRFLWLWPYLSYVEA). Cys117 and Cys167 are joined by a disulfide.

This sequence belongs to the leptin family.

It is found in the secreted. Key player in the regulation of energy balance and body weight control. Once released into the circulation, has central and peripheral effects by binding LEPR, found in many tissues, which results in the activation of several major signaling pathways. In the hypothalamus, acts as an appetite-regulating factor that induces a decrease in food intake and an increase in energy consumption by inducing anorexinogenic factors and suppressing orexigenic neuropeptides, also regulates bone mass and secretion of hypothalamo-pituitary-adrenal hormones. In the periphery, increases basal metabolism, influences reproductive function, regulates pancreatic beta-cell function and insulin secretion, is pro-angiogenic for endothelial cell and affects innate and adaptive immunity. In the arcuate nucleus of the hypothalamus, activates by depolarization POMC neurons inducing FOS and SOCS3 expression to release anorexigenic peptides and inhibits by hyperpolarization NPY neurons inducing SOCS3 with a consequent reduction on release of orexigenic peptides. In addition to its known satiety inducing effect, has a modulatory role in nutrient absorption. In the intestine, reduces glucose absorption by enterocytes by activating PKC and leading to a sequential activation of p38, PI3K and ERK signaling pathways which exerts an inhibitory effect on glucose absorption. Acts as a growth factor on certain tissues, through the activation of different signaling pathways increases expression of genes involved in cell cycle regulation such as CCND1, via JAK2-STAT3 pathway, or VEGFA, via MAPK1/3 and PI3K-AKT1 pathways. May also play an apoptotic role via JAK2-STAT3 pathway and up-regulation of BIRC5 expression. Pro-angiogenic, has mitogenic activity on vascular endothelial cells and plays a role in matrix remodeling by regulating the expression of matrix metalloproteinases (MMPs) and tissue inhibitors of metalloproteinases (TIMPs). In innate immunity, modulates the activity and function of neutrophils by increasing chemotaxis and the secretion of oxygen radicals. Increases phagocytosis by macrophages and enhances secretion of pro-inflammatory mediators. Increases cytotoxic ability of NK cells. Plays a pro-inflammatory role, in synergy with IL1B, by inducing NOS2 which promotes the production of IL6, IL8 and Prostaglandin E2, through a signaling pathway that involves JAK2, PI3K, MAP2K1/MEK1 and MAPK14/p38. In adaptive immunity, promotes the switch of memory T-cells towards T helper-1 cell immune responses. Increases CD4(+)CD25(-) T-cell proliferation and reduces autophagy during TCR (T-cell receptor) stimulation, through MTOR signaling pathway activation and BCL2 up-regulation. The sequence is that of Leptin (LEP) from Capra hircus (Goat).